Reading from the N-terminus, the 681-residue chain is SRSF protein kinase 2 (681 aa).

Positions 1–63 (MSVNSEKSSS…EQEDPADYCK (63 aa)) are disordered. The segment covering 22–41 (LVPPPPPPPPPPPLPDPAPP) has biased composition (pro residues). The segment covering 42–59 (EPEEEILGSDDEEQEDPA) has biased composition (acidic residues). Position 50 is a phosphoserine (Ser-50). One can recognise a Protein kinase domain in the interval 79 to 681 (YHVIRKLGWG…ECLRHPWLNS (603 aa)). ATP is bound by residues 85-93 (LGWGHFSTV) and Lys-108. Asp-212 functions as the Proton acceptor in the catalytic mechanism. 3 disordered regions span residues 237–270 (WQKA…KKKL), 302–452 (ENIT…PLFS), and 467–499 (GSPL…KTKT). Thr-331 and Thr-332 each carry phosphothreonine. A Phosphoserine modification is found at Ser-378. Residues 395–419 (QLEDEEDDEDDCANPEEYNLDEPNA) show a composition bias toward acidic residues. Over residues 421 to 431 (SDYTYSSSYEQ) the composition is skewed to polar residues. Ser-468 is modified (phosphoserine). Thr-471 is subject to Phosphothreonine. Phosphoserine occurs at positions 477, 479, and 483. Thr-485 bears the Phosphothreonine; by PKB/AKT1 mark. Residues Ser-487 and Ser-490 each carry the phosphoserine modification. Ser-581 carries the phosphoserine; by CK2 modification.

The protein belongs to the protein kinase superfamily. CMGC Ser/Thr protein kinase family. As to quaternary structure, associates with U4/U6-U5 tri-small nuclear ribonucleoproteins (U4/U6-U5 tri-snRNPs). Interacts with PKB/AKT1 in a phosphorylation-dependent manner. The phosphorylated form (by PKB/AKT1) interacts with YWHAB and YWHAE. Interaction with YWHAB suppresses its cleavage by caspases and inhibits the release of its N-terminal pro-apoptotic fragment. Interacts with SFN. Interacts with ACIN1. Interacts with POLR2A/RNA polymerase II; the interaction occurs during the co-transcriptional formation of inappropriate R-loops. The cofactor is Mg(2+). Post-translationally, phosphorylation at Thr-485 by PKB/AKT1 enhances its stimulatory activity in triggering cyclin-D1 (CCND1) expression and promoting apoptosis in neurons, which can be blocked by YWHAB. It also enhances its protein kinase activity toward ACIN1 and SRSF2, promotes its nuclear translocation and prevents its proteolytic cleavage. Proteolytically cleaved at Asp-137 and Asp-401 by caspase-3 during apoptotic cell death. Cleavage at Asp-137 which is the major site of cleavage, produces a small N-terminal fragment that translocates into nucleus and promotes VP16-induced apoptosis. In terms of tissue distribution, expressed in testes, lung and brain.

The protein localises to the cytoplasm. It is found in the nucleus. The protein resides in the nucleoplasm. Its subcellular location is the nucleus speckle. It localises to the chromosome. It carries out the reaction L-seryl-[protein] + ATP = O-phospho-L-seryl-[protein] + ADP + H(+). It catalyses the reaction L-threonyl-[protein] + ATP = O-phospho-L-threonyl-[protein] + ADP + H(+). With respect to regulation, activated by phosphorylation on Ser-50 and Ser-581. Functionally, serine/arginine-rich protein-specific kinase which specifically phosphorylates its substrates at serine residues located in regions rich in arginine/serine dipeptides, known as RS domains and is involved in the phosphorylation of SR splicing factors and the regulation of splicing. Promotes neuronal apoptosis by up-regulating cyclin-D1 (CCND1) expression. This is done by the phosphorylation of SRSF2, leading to the suppression of p53/TP53 phosphorylation thereby relieving the repressive effect of p53/TP53 on cyclin-D1 (CCND1) expression. Phosphorylates ACIN1, and redistributes it from the nuclear speckles to the nucleoplasm, resulting in cyclin A1 but not cyclin A2 up-regulation. Plays an essential role in spliceosomal B complex formation via the phosphorylation of DDX23/PRP28. Probably by phosphorylating DDX23, leads to the suppression of incorrect R-loops formed during transcription; R-loops are composed of a DNA:RNA hybrid and the associated non-template single-stranded DNA. In Mus musculus (Mouse), this protein is SRSF protein kinase 2.